A 175-amino-acid polypeptide reads, in one-letter code: Adenine phosphoribosyltransferase (175 aa).

Belongs to the purine/pyrimidine phosphoribosyltransferase family. Homodimer.

It is found in the cytoplasm. It catalyses the reaction AMP + diphosphate = 5-phospho-alpha-D-ribose 1-diphosphate + adenine. It functions in the pathway purine metabolism; AMP biosynthesis via salvage pathway; AMP from adenine: step 1/1. Functionally, catalyzes a salvage reaction resulting in the formation of AMP, that is energically less costly than de novo synthesis. The polypeptide is Adenine phosphoribosyltransferase (Synechococcus sp. (strain JA-2-3B'a(2-13)) (Cyanobacteria bacterium Yellowstone B-Prime)).